The following is a 242-amino-acid chain: Type III pantothenate kinase (242 aa).

7-14 is a binding site for ATP; the sequence is DLGNSRFK. Substrate is bound by residues Tyr-91 and 98–101; that span reads GVDR. Asp-100 (proton acceptor) is an active-site residue. An ATP-binding site is contributed by Thr-121. Position 171 (Thr-171) interacts with substrate.

This sequence belongs to the type III pantothenate kinase family. As to quaternary structure, homodimer. The cofactor is NH4(+). K(+) serves as cofactor.

The protein localises to the cytoplasm. The enzyme catalyses (R)-pantothenate + ATP = (R)-4'-phosphopantothenate + ADP + H(+). The protein operates within cofactor biosynthesis; coenzyme A biosynthesis; CoA from (R)-pantothenate: step 1/5. In terms of biological role, catalyzes the phosphorylation of pantothenate (Pan), the first step in CoA biosynthesis. This is Type III pantothenate kinase from Xanthomonas campestris pv. campestris (strain 8004).